The chain runs to 231 residues: MEESNLFETTLYDGELFLLPSHLQRMKASAKSLGYSWPGEQYIENKLREAVQDTSMARVRWELSKAGDVTVQIVPIQTLEKAPYTLILDKQPSSTEKNPSCINKMTNRAIYIEAMNRNDAQYSKAQDVLLYNHQGFVTEATIFNVAFHRNGQWITPSLKHGLLSGTMRKNLLENGSIHEDDKGLLQKDNLKNGEQVLLFNSFRKVCKGVLIIQPEKACELLKKKDSSEKLS.

Belongs to the class-IV pyridoxal-phosphate-dependent aminotransferase family. Pyridoxal 5'-phosphate is required as a cofactor.

It localises to the cytoplasm. The protein localises to the nucleus. It carries out the reaction 4-amino-4-deoxychorismate = 4-aminobenzoate + pyruvate + H(+). It functions in the pathway cofactor biosynthesis; tetrahydrofolate biosynthesis; 4-aminobenzoate from chorismate: step 2/2. Its function is as follows. Converts 4-amino-4-deoxychorismate into 4-aminobenzoate (PABA) and pyruvate. In Schizosaccharomyces pombe (strain 972 / ATCC 24843) (Fission yeast), this protein is Putative aminodeoxychorismate lyase.